A 125-amino-acid chain; its full sequence is Ribosome-binding factor A (125 aa).

The protein belongs to the RbfA family. Monomer. Binds 30S ribosomal subunits, but not 50S ribosomal subunits or 70S ribosomes.

It is found in the cytoplasm. Functionally, one of several proteins that assist in the late maturation steps of the functional core of the 30S ribosomal subunit. Associates with free 30S ribosomal subunits (but not with 30S subunits that are part of 70S ribosomes or polysomes). Required for efficient processing of 16S rRNA. May interact with the 5'-terminal helix region of 16S rRNA. The protein is Ribosome-binding factor A of Xylella fastidiosa (strain M12).